The chain runs to 342 residues: Ferredoxin--NADP reductase (342 aa).

8 residues coordinate FAD: C17, D36, Q44, Y49, I89, F124, D289, and T330.

Belongs to the ferredoxin--NADP reductase type 2 family. Homodimer. FAD is required as a cofactor.

The enzyme catalyses 2 reduced [2Fe-2S]-[ferredoxin] + NADP(+) + H(+) = 2 oxidized [2Fe-2S]-[ferredoxin] + NADPH. The sequence is that of Ferredoxin--NADP reductase from Rhodopseudomonas palustris (strain HaA2).